A 513-amino-acid chain; its full sequence is cAMP-regulated M3R protein (513 aa).

It to D.discoideum protein M3L.

This Dictyostelium discoideum (Social amoeba) protein is cAMP-regulated M3R protein (prtB).